The following is a 204-amino-acid chain: MSQPITRILKIDSSARAESSMSRKLAQQLTEQLIAANPGAEVVSRDVSGGLPFVTEEWIGASYTPADQRTEAQNQALALSDSLIEEVQAADTLVIAVPMYNFSVPATLKAYIDQICRAQVTFRYTEQGPVGLLENKKAYVVTVTGGTPVNSAADFVSAYMRQVLGFIGIKDVTFINADRIMVDPESILADAQQQIAAATEVAAA.

Residues S14, 20–22, and 99–102 each bind FMN; these read SMS and MYNF.

This sequence belongs to the azoreductase type 1 family. Homodimer. It depends on FMN as a cofactor.

It carries out the reaction 2 a quinone + NADH + H(+) = 2 a 1,4-benzosemiquinone + NAD(+). It catalyses the reaction N,N-dimethyl-1,4-phenylenediamine + anthranilate + 2 NAD(+) = 2-(4-dimethylaminophenyl)diazenylbenzoate + 2 NADH + 2 H(+). Functionally, quinone reductase that provides resistance to thiol-specific stress caused by electrophilic quinones. Its function is as follows. Also exhibits azoreductase activity. Catalyzes the reductive cleavage of the azo bond in aromatic azo compounds to the corresponding amines. This Hahella chejuensis (strain KCTC 2396) protein is FMN-dependent NADH:quinone oxidoreductase 1.